Consider the following 164-residue polypeptide: Protein-export protein SecB (164 aa).

It belongs to the SecB family. In terms of assembly, homotetramer, a dimer of dimers. One homotetramer interacts with 1 SecA dimer.

It is found in the cytoplasm. Its function is as follows. One of the proteins required for the normal export of preproteins out of the cell cytoplasm. It is a molecular chaperone that binds to a subset of precursor proteins, maintaining them in a translocation-competent state. It also specifically binds to its receptor SecA. In Orientia tsutsugamushi (strain Ikeda) (Rickettsia tsutsugamushi), this protein is Protein-export protein SecB.